Reading from the N-terminus, the 114-residue chain is Iron-sulfur cluster insertion protein ErpA (114 aa).

Iron-sulfur cluster-binding residues include cysteine 42, cysteine 106, and cysteine 108.

The protein belongs to the HesB/IscA family. In terms of assembly, homodimer. Iron-sulfur cluster is required as a cofactor.

Required for insertion of 4Fe-4S clusters for at least IspG. The sequence is that of Iron-sulfur cluster insertion protein ErpA from Haemophilus ducreyi (strain 35000HP / ATCC 700724).